Consider the following 906-residue polypeptide: Toll-like receptor 12 (906 aa).

An N-terminal signal peptide occupies residues 1–21; that stretch reads MGRYWLLPGLLLSLPLVTGWS. The Extracellular portion of the chain corresponds to 22 to 709; it reads TSNCLVTEGS…DHCPQTLELK (688 aa). A glycan (N-linked (GlcNAc...) asparagine) is linked at Asn59. LRR repeat units follow at residues 91 to 114, 115 to 140, 142 to 170, 198 to 222, 224 to 247, 267 to 290, 291 to 314, 316 to 338, 341 to 364, 366 to 388, 389 to 412, 414 to 436, 462 to 484, 485 to 508, and 510 to 533; these read FPGLKVLALSLHLTQLLPGALRGL, GQLQSLSFFDSPLRRSLFLPPDAFSD, ISLQRLHISGPCLDKKAGIRLPPGLQWLG, SWTLQKLDLSSNWKLKMASPGSLQG, QVEILDLTRTPLDAVWLKGLGLQK, HFELQGLIVKESKIGSISQEALAS, CHSLKTLGLSSTGLTKLPPGFLTA, PRLQRLELSGNQLQSAVLCMNET, VSGLTTLDLSGNRLRILPPAAFSC, PHLRELLLRYNQLLSLEGYLFQE, LQQLETLKLDGNPLLHLGKNWLAA, PALTTLSLLDTQIRMSPEPGFWG, LTSLELHIASGTTEHWTLSPAIF, PSLETLTISGGGLKLKLGSQNASG, and FPALQKLSLLKNSLDAFCSQGTSN. N-linked (GlcNAc...) asparagine glycosylation is present at Asn336. A glycan (N-linked (GlcNAc...) asparagine) is linked at Asn505. Asn552 carries an N-linked (GlcNAc...) asparagine glycan. 2 LRR repeats span residues 562–586 and 591–614; these read LPSLRELKLASLQSITQPRSVQLEE and LPQLQALVLSSTGLKSLSAAAFQR. Residues 710–730 form a helical membrane-spanning segment; that stretch reads LFLASSALVFMLIALPLLQEA. Topologically, residues 731–906 are cytoplasmic; that stretch reads RNSWIPYLQA…FWTWLRSRLG (176 aa). A TIR domain is found at 759-905; it reads FLFDVFVSHC…GFWTWLRSRL (147 aa).

The protein belongs to the Toll-like receptor family. Binds MYD88 via their respective TIR domains. As to expression, macrophages, liver, kidney and bladder epithelial cells.

It localises to the membrane. Participates in the innate immune response to microbial agents. Acts via MYD88 and TRAF6, leading to NF-kappa-B activation, cytokine secretion and the inflammatory response. Plays a role in preventing infection of internal organs of the urogenital system. The protein is Toll-like receptor 12 of Mus musculus (Mouse).